The sequence spans 168 residues: Protein GrpE (168 aa).

Belongs to the GrpE family. As to quaternary structure, homodimer.

It is found in the cytoplasm. Its function is as follows. Participates actively in the response to hyperosmotic and heat shock by preventing the aggregation of stress-denatured proteins, in association with DnaK and GrpE. It is the nucleotide exchange factor for DnaK and may function as a thermosensor. Unfolded proteins bind initially to DnaJ; upon interaction with the DnaJ-bound protein, DnaK hydrolyzes its bound ATP, resulting in the formation of a stable complex. GrpE releases ADP from DnaK; ATP binding to DnaK triggers the release of the substrate protein, thus completing the reaction cycle. Several rounds of ATP-dependent interactions between DnaJ, DnaK and GrpE are required for fully efficient folding. In Thermotoga neapolitana (strain ATCC 49049 / DSM 4359 / NBRC 107923 / NS-E), this protein is Protein GrpE.